Here is a 253-residue protein sequence, read N- to C-terminus: 23S rRNA (cytidine-2'-O)-methyltransferase TlyA (253 aa).

The 73-residue stretch at 1–73 (MRFDFFVSKR…LKLDLLSEIY (73 aa)) folds into the S4 RNA-binding domain.

It belongs to the TlyA family.

It carries out the reaction cytidine(1920) in 23S rRNA + S-adenosyl-L-methionine = 2'-O-methylcytidine(1920) in 23S rRNA + S-adenosyl-L-homocysteine + H(+). Its function is as follows. Catalyzes the 2'-O-methylation at nucleotide C1920 in 23S rRNA. Enhances motility. Enhances biofilm formation. Involved in the assembly of 70S ribosomes. Involved in virulence by promoting adherence and invasion to host cells. Involved in pathogenicity by modulating secretion of host-protective chemokine interleukin 8 (IL-8). Involved in susceptibility to antibiotic capreomycin. The sequence is that of 23S rRNA (cytidine-2'-O)-methyltransferase TlyA from Campylobacter jejuni subsp. jejuni serotype O:23/36 (strain 81-176).